The primary structure comprises 114 residues: uncharacterized protein (114 aa).

The tract at residues 1–114 (MSTAASSRMR…HASQSPDTAY (114 aa)) is disordered. Over residues 32–43 (CRRVPSRPCRPV) the composition is skewed to low complexity.

This is an uncharacterized protein from Human adenovirus B serotype 7 (HAdV-7).